The chain runs to 221 residues: Riboflavin kinase (221 aa).

The tract at residues 1–89 (MENIYIALKT…ISSILRFSQE (89 aa)) is H-T-H motif-like. The tract at residues 90 to 221 (LKLVGAVQDG…EVLASIDGKL (132 aa)) is riboflavin kinase. 99-104 (GLGEGK) contributes to the CDP binding site. 2 residues coordinate Mg(2+): threonine 128 and asparagine 130. The FMN site is built by serine 185 and glutamate 192. A CDP-binding site is contributed by 197–200 (KYLR).

It belongs to the archaeal riboflavin kinase family. Mg(2+) is required as a cofactor.

The catalysed reaction is riboflavin + CTP = CDP + FMN + H(+). It functions in the pathway cofactor biosynthesis; FMN biosynthesis; FMN from riboflavin (CTP route): step 1/1. In terms of biological role, catalyzes the CTP-dependent phosphorylation of riboflavin (vitamin B2) to form flavin mononucleotide (FMN). This Picrophilus torridus (strain ATCC 700027 / DSM 9790 / JCM 10055 / NBRC 100828 / KAW 2/3) protein is Riboflavin kinase (ribK).